Reading from the N-terminus, the 847-residue chain is E4 SUMO-protein ligase PIAL1 (847 aa).

The interval 113-271 (VNSPVTLISQ…EVVGSNSDCD (159 aa)) is interacting domain (IND), required for interaction with MOM1 and PIAL2. An SP-RING-type zinc finger spans residues 268-349 (SDCDIIEGPS…LRKILEEVGR (82 aa)). Positions 299, 301, 322, and 325 each coordinate Zn(2+). 7 tandem repeats follow at residues 569-591 (QRPV…ENAD), 592-614 (QRWM…GNTN), 615-637 (QRPI…GNTD), 638-659 (HRST…GNAD), 660-682 (QRPM…GYAH), 683-705 (QRPM…GTPD), and 706-728 (QRPM…GTTD). The tract at residues 569–728 (QRPVPSYIAH…LPVSYGGTTD (160 aa)) is 7 X 23 AA approximate tandem repeats.

The protein belongs to the PIAL protein ligase family. As to quaternary structure, homodimer. Interacts with MOM1 and PIAL2 to form a high molecular mass complex which mediates transcriptional gene silencing at heterochromatin regions. Expressed in leaves, stems and flowers, and, at low levels, in siliques and old leaves.

Its subcellular location is the nucleus. It participates in protein modification; protein sumoylation. Its function is as follows. Together with MOM1 and PIAL2, regulates transcriptional gene silencing (TGS) independently of changes in DNA methylation. E4-type SUMO ligase that promotes SUMO chain formation in a SCE1-dependent manner and thus contributes to a pathway for proteolytic removal of sumoylation substrates. Involved in stress responses (e.g. osmotic, salt and abscisic acid ABA) and sulfur metabolism. In Arabidopsis thaliana (Mouse-ear cress), this protein is E4 SUMO-protein ligase PIAL1.